Reading from the N-terminus, the 466-residue chain is 23S rRNA (uracil(1939)-C(5))-methyltransferase RlmD (466 aa).

In terms of domain architecture, TRAM spans 1 to 54 (MVDVLNIESLDLEARGIAHRDGKVLFVEGALPGERVTVQTVRRKPSYEIAKVEE). [4Fe-4S] cluster is bound by residues cysteine 67, cysteine 73, cysteine 76, and cysteine 155. S-adenosyl-L-methionine-binding residues include glutamine 264, phenylalanine 293, asparagine 298, glutamate 314, asparagine 342, and aspartate 363. The active-site Nucleophile is the cysteine 393.

This sequence belongs to the class I-like SAM-binding methyltransferase superfamily. RNA M5U methyltransferase family. RlmD subfamily.

The catalysed reaction is uridine(1939) in 23S rRNA + S-adenosyl-L-methionine = 5-methyluridine(1939) in 23S rRNA + S-adenosyl-L-homocysteine + H(+). Its function is as follows. Catalyzes the formation of 5-methyl-uridine at position 1939 (m5U1939) in 23S rRNA. The polypeptide is 23S rRNA (uracil(1939)-C(5))-methyltransferase RlmD (Bordetella parapertussis (strain 12822 / ATCC BAA-587 / NCTC 13253)).